The sequence spans 365 residues: Carboxynorspermidine/carboxyspermidine decarboxylase (365 aa).

An N6-(pyridoxal phosphate)lysine modification is found at lysine 37. Substrate is bound by residues glutamate 233 and aspartate 269.

This sequence belongs to the Orn/Lys/Arg decarboxylase class-II family. NspC subfamily. Homodimer. Pyridoxal 5'-phosphate serves as cofactor.

The protein resides in the cytoplasm. It carries out the reaction carboxynorspermidine + H(+) = norspermidine + CO2. It catalyses the reaction carboxyspermidine + H(+) = spermidine + CO2. In terms of biological role, catalyzes the decarboxylation of carboxynorspermidine and carboxyspermidine. The sequence is that of Carboxynorspermidine/carboxyspermidine decarboxylase from Herminiimonas arsenicoxydans.